The chain runs to 89 residues: Large ribosomal subunit protein bL31B (89 aa).

This sequence belongs to the bacterial ribosomal protein bL31 family. Type B subfamily. In terms of assembly, part of the 50S ribosomal subunit.

The chain is Large ribosomal subunit protein bL31B from Aeromonas hydrophila subsp. hydrophila (strain ATCC 7966 / DSM 30187 / BCRC 13018 / CCUG 14551 / JCM 1027 / KCTC 2358 / NCIMB 9240 / NCTC 8049).